Consider the following 282-residue polypeptide: Formamidopyrimidine-DNA glycosylase (282 aa).

Catalysis depends on Pro-2, which acts as the Schiff-base intermediate with DNA. The active-site Proton donor is the Glu-3. Lys-60 acts as the Proton donor; for beta-elimination activity in catalysis. Positions 99, 118, and 163 each coordinate DNA. Residues 248 to 282 (WVYRRSGKNCKKCGEKILREKICGRSTHWCPNCQK) form an FPG-type zinc finger. The active-site Proton donor; for delta-elimination activity is Arg-272.

The protein belongs to the FPG family. In terms of assembly, monomer. Requires Zn(2+) as cofactor.

The enzyme catalyses Hydrolysis of DNA containing ring-opened 7-methylguanine residues, releasing 2,6-diamino-4-hydroxy-5-(N-methyl)formamidopyrimidine.. It catalyses the reaction 2'-deoxyribonucleotide-(2'-deoxyribose 5'-phosphate)-2'-deoxyribonucleotide-DNA = a 3'-end 2'-deoxyribonucleotide-(2,3-dehydro-2,3-deoxyribose 5'-phosphate)-DNA + a 5'-end 5'-phospho-2'-deoxyribonucleoside-DNA + H(+). Its function is as follows. Involved in base excision repair of DNA damaged by oxidation or by mutagenic agents. Acts as a DNA glycosylase that recognizes and removes damaged bases. Has a preference for oxidized purines, such as 7,8-dihydro-8-oxoguanine (8-oxoG). Has AP (apurinic/apyrimidinic) lyase activity and introduces nicks in the DNA strand. Cleaves the DNA backbone by beta-delta elimination to generate a single-strand break at the site of the removed base with both 3'- and 5'-phosphates. The chain is Formamidopyrimidine-DNA glycosylase from Prochlorococcus marinus (strain NATL2A).